The primary structure comprises 255 residues: PHD finger protein ALFIN-LIKE 4 (255 aa).

Met-1 is subject to N-acetylmethionine. The segment at 145 to 200 (GKDKSSVSNNSSNRSKSSSKRGSESRAKFSKPEPKDDEEEEEEGVEEEDEDEQGET) is disordered. Over residues 150–160 (SVSNNSSNRSK) the composition is skewed to low complexity. The span at 165 to 178 (RGSESRAKFSKPEP) shows a compositional bias: basic and acidic residues. Acidic residues predominate over residues 179–198 (KDDEEEEEEGVEEEDEDEQG). The PHD-type zinc finger occupies 199–251 (ETQCGACGESYAADEFWICCDLCEMWFHGKCVKITPARAEHIKQYKCPSCSNK).

This sequence belongs to the Alfin family. Interacts with H3K4me3 and to a lesser extent with H3K4me2. In terms of tissue distribution, ubiquitously expressed.

Its subcellular location is the nucleus. In terms of biological role, histone-binding component that specifically recognizes H3 tails trimethylated on 'Lys-4' (H3K4me3), which mark transcription start sites of virtually all active genes. In Arabidopsis thaliana (Mouse-ear cress), this protein is PHD finger protein ALFIN-LIKE 4 (AL4).